The chain runs to 180 residues: CASP-like protein 2D1 (180 aa).

Residues 1 to 7 (MAASGLK) lie on the Cytoplasmic side of the membrane. A helical transmembrane segment spans residues 8–28 (VPEMALRVCVVPLALASLWEM). Over 29-48 (ATNAQADDTYGEVKFSDLSG) the chain is Extracellular. A helical transmembrane segment spans residues 49–69 (FSYLVGVNAVTAAYALVSILL). At 70-79 (SSLKPLARYD) the chain is on the cytoplasmic side. The helical transmembrane segment at 80–100 (WVILVMDQASAYLLVTSASAA) threads the bilayer. Residues 101-129 (AELLQLARRGDREVSWGEVCSYFGRFCGK) are Extracellular-facing. A helical transmembrane segment spans residues 130–150 (ATVSLALHAAALACFVALALV). The Cytoplasmic segment spans residues 151-180 (SAFRVLSTTGSSCHPPKHAQAQEHEQGRYN). The interval 161 to 180 (SSCHPPKHAQAQEHEQGRYN) is disordered. The span at 170–180 (QAQEHEQGRYN) shows a compositional bias: basic and acidic residues.

Belongs to the Casparian strip membrane proteins (CASP) family. In terms of assembly, homodimer and heterodimers.

It localises to the cell membrane. The protein is CASP-like protein 2D1 of Sorghum bicolor (Sorghum).